A 417-amino-acid polypeptide reads, in one-letter code: Inhibitor of growth protein 3 (417 aa).

Disordered stretches follow at residues 128-203 (TPSQ…YNTN) and 286-320 (QTLS…SSSS). A compositionally biased stretch (basic residues) spans 136 to 152 (HHAHSHTPVEKRKHNPS). A compositionally biased stretch (basic and acidic residues) spans 156-168 (GATDHVPEKKFKS). 3 stretches are compositionally biased toward low complexity: residues 189-203 (NNNS…YNTN), 286-295 (QTLSSSSTDS), and 307-320 (SSSQ…SSSS). The segment at 359-408 (PRYCICNQVSYGEMVGCDNQDCPIEWFHYGCVGLTEAPKGKWYCPQCTAA) adopts a PHD-type zinc-finger fold. Residues C362, C364, C375, C380, H386, C389, C402, and C405 each coordinate Zn(2+).

The protein belongs to the ING family. In terms of assembly, interacts with H3K4me3 and to a lesser extent with H3K4me2. Component of the NuA4 histone acetyltransferase complex.

The protein resides in the nucleus. Its function is as follows. Component of the NuA4 histone acetyltransferase (HAT) complex which is involved in transcriptional activation of select genes principally by acetylation of nucleosomal histone H4 and H2A. This modification may both alter nucleosome - DNA interactions and promote interaction of the modified histones with other proteins which positively regulate transcription. NuA4 may also play a direct role in DNA repair when directly recruited to sites of DNA damage. This is Inhibitor of growth protein 3 (ING3) from Gallus gallus (Chicken).